The sequence spans 373 residues: Glutamate 5-kinase (373 aa).

ATP is bound at residue Lys-15. Positions 55, 142, and 154 each coordinate substrate. ATP-binding positions include 174–175 (TD) and 216–222 (TGGMATK). The PUA domain occupies 281–359 (AGSIVVDAGA…SEIEGILGFR (79 aa)).

Belongs to the glutamate 5-kinase family.

The protein resides in the cytoplasm. It carries out the reaction L-glutamate + ATP = L-glutamyl 5-phosphate + ADP. It functions in the pathway amino-acid biosynthesis; L-proline biosynthesis; L-glutamate 5-semialdehyde from L-glutamate: step 1/2. Its function is as follows. Catalyzes the transfer of a phosphate group to glutamate to form L-glutamate 5-phosphate. This is Glutamate 5-kinase from Citrifermentans bemidjiense (strain ATCC BAA-1014 / DSM 16622 / JCM 12645 / Bem) (Geobacter bemidjiensis).